The following is a 335-amino-acid chain: Teichoic acids export ATP-binding protein TagH (335 aa).

In terms of domain architecture, ABC transporter spans 26–246 (IKGLFMPKSQ…YDEFVKWFNK (221 aa)). 60 to 67 (GINGSGKS) contributes to the ATP binding site.

It belongs to the ABC transporter superfamily. Teichoic acids exporter (TC 3.A.1.104.1) family. The complex is composed of two ATP-binding proteins (TagH) and two transmembrane proteins (TagG).

The protein resides in the cell membrane. It catalyses the reaction ATP + H2O + teichoic acidSide 1 = ADP + phosphate + teichoic acidSide 2.. In terms of biological role, part of the ABC transporter complex TagGH involved in teichoic acids export. Responsible for energy coupling to the transport system. The chain is Teichoic acids export ATP-binding protein TagH from Listeria innocua serovar 6a (strain ATCC BAA-680 / CLIP 11262).